We begin with the raw amino-acid sequence, 526 residues long: Glucose-6-phosphate isomerase (526 aa).

The active-site Proton donor is the Glu347. Residues His378 and Lys493 contribute to the active site.

This sequence belongs to the GPI family.

The protein resides in the cytoplasm. It carries out the reaction alpha-D-glucose 6-phosphate = beta-D-fructose 6-phosphate. The protein operates within carbohydrate biosynthesis; gluconeogenesis. Its pathway is carbohydrate degradation; glycolysis; D-glyceraldehyde 3-phosphate and glycerone phosphate from D-glucose: step 2/4. Its function is as follows. Catalyzes the reversible isomerization of glucose-6-phosphate to fructose-6-phosphate. The chain is Glucose-6-phosphate isomerase from Chlamydia pneumoniae (Chlamydophila pneumoniae).